The following is a 168-amino-acid chain: Protein C2-DOMAIN ABA-RELATED 3 (168 aa).

Residues 1–106 (MSLMDNLLGI…IEALRMELSG (106 aa)) form the C2 domain. Residues Arg24, Asp25, Asp30, Asp76, His77, Asp78, and Asp84 each contribute to the Ca(2+) site.

Belongs to the plant CAR protein family. Binds to PYR/PYL/RCAR abscisic acid intracellular receptors in an ABA-independent manner, both at the plasma membrane and in the nucleus. Ca(2+) is required as a cofactor.

It localises to the cell membrane. The protein resides in the nucleus. Functionally, stimulates the GTPase/ATPase activities of Obg-like ATPases. Mediates the transient calcium-dependent interaction of PYR/PYL/RCAR abscisic acid (ABA) receptors with the plasma membrane and thus regulates ABA sensitivity. The polypeptide is Protein C2-DOMAIN ABA-RELATED 3 (Arabidopsis thaliana (Mouse-ear cress)).